The chain runs to 49 residues: Large ribosomal subunit protein bL33 (49 aa).

It belongs to the bacterial ribosomal protein bL33 family.

The sequence is that of Large ribosomal subunit protein bL33 from Pelotomaculum thermopropionicum (strain DSM 13744 / JCM 10971 / SI).